The chain runs to 514 residues: 2-isopropylmalate synthase (514 aa).

The 264-residue stretch at 5–268 folds into the Pyruvate carboxyltransferase domain; sequence LIIFDTTLRD…DVGLDTTQIV (264 aa). Mn(2+)-binding residues include aspartate 14, histidine 202, histidine 204, and asparagine 239. The regulatory domain stretch occupies residues 395 to 514; the sequence is KFVSLSQRSE…KDDKLNPQRS (120 aa).

The protein belongs to the alpha-IPM synthase/homocitrate synthase family. LeuA type 1 subfamily. Homodimer. Mn(2+) serves as cofactor.

It is found in the cytoplasm. The enzyme catalyses 3-methyl-2-oxobutanoate + acetyl-CoA + H2O = (2S)-2-isopropylmalate + CoA + H(+). It functions in the pathway amino-acid biosynthesis; L-leucine biosynthesis; L-leucine from 3-methyl-2-oxobutanoate: step 1/4. Functionally, catalyzes the condensation of the acetyl group of acetyl-CoA with 3-methyl-2-oxobutanoate (2-ketoisovalerate) to form 3-carboxy-3-hydroxy-4-methylpentanoate (2-isopropylmalate). This chain is 2-isopropylmalate synthase, found in Burkholderia ambifaria (strain ATCC BAA-244 / DSM 16087 / CCUG 44356 / LMG 19182 / AMMD) (Burkholderia cepacia (strain AMMD)).